Here is a 190-residue protein sequence, read N- to C-terminus: Large ribosomal subunit protein bL9 (190 aa).

This sequence belongs to the bacterial ribosomal protein bL9 family.

Binds to the 23S rRNA. This chain is Large ribosomal subunit protein bL9, found in Methylorubrum extorquens (strain CM4 / NCIMB 13688) (Methylobacterium extorquens).